The chain runs to 244 residues: tRNA pseudouridine synthase A (244 aa).

The active-site Nucleophile is aspartate 52. Tyrosine 110 is a substrate binding site.

Belongs to the tRNA pseudouridine synthase TruA family. In terms of assembly, homodimer.

The enzyme catalyses uridine(38/39/40) in tRNA = pseudouridine(38/39/40) in tRNA. Formation of pseudouridine at positions 38, 39 and 40 in the anticodon stem and loop of transfer RNAs. This chain is tRNA pseudouridine synthase A, found in Caldicellulosiruptor saccharolyticus (strain ATCC 43494 / DSM 8903 / Tp8T 6331).